The sequence spans 408 residues: Phosphatidylinositol transfer protein CSR1 (408 aa).

Position 2 is an N-acetylserine (Ser2). Ser2 is subject to Phosphoserine. A CRAL-TRIO domain is found at 157–317 (ETGVIKNLEL…YLGGENDNDL (161 aa)).

This sequence belongs to the PITP family. As to quaternary structure, forms a complex with 2 TSA2 subunits. Binds phosphatidylinositol (PtdIns).

The protein localises to the cytoplasm. The protein resides in the microsome. It is found in the endosome. The enzyme catalyses a 1,2-diacyl-sn-glycero-3-phospho-(1D-myo-inositol)(in) = a 1,2-diacyl-sn-glycero-3-phospho-(1D-myo-inositol)(out). Non-classical phosphatidylinositol (PtdIns) transfer protein (PITP), which exhibits PtdIns-binding/transfer activity in the absence of detectable PtdCho-binding/transfer activity. Activates SPO14/PLD1 (phospholipase D1) by stimulating phosphoinositide synthesis via the STT4 PtdIns 4-kinase. Modulates ArfGAP function through effects on SPO14 activity. Inhibits phosphatidylcholine degradation by PLB1 (phospholipase B1). May also regulate post-Golgi membrane-trafficking events and have a role resistance to oxidative stress. Inhibits fatty acid synthase activity in response to heme depletion and oleic acid starvation, preventing saturated fatty acid (SFA) accumulation. The sequence is that of Phosphatidylinositol transfer protein CSR1 (CSR1) from Saccharomyces cerevisiae (strain ATCC 204508 / S288c) (Baker's yeast).